A 144-amino-acid polypeptide reads, in one-letter code: Putative pre-16S rRNA nuclease (144 aa).

Belongs to the YqgF nuclease family.

The protein localises to the cytoplasm. Its function is as follows. Could be a nuclease involved in processing of the 5'-end of pre-16S rRNA. This chain is Putative pre-16S rRNA nuclease, found in Lacticaseibacillus casei (strain BL23) (Lactobacillus casei).